A 514-amino-acid chain; its full sequence is GMP synthase [glutamine-hydrolyzing] (514 aa).

The 191-residue stretch at 9–199 (MILVLDFGGQ…LFEVCQCTGD (191 aa)) folds into the Glutamine amidotransferase type-1 domain. Cysteine 86 acts as the Nucleophile in catalysis. Active-site residues include histidine 173 and glutamate 175. Positions 200 to 389 (WSMENFIEIE…LGLSDEIVWR (190 aa)) constitute a GMPS ATP-PPase domain. Residue 227–233 (SGGVDSS) participates in ATP binding.

In terms of assembly, homodimer.

The enzyme catalyses XMP + L-glutamine + ATP + H2O = GMP + L-glutamate + AMP + diphosphate + 2 H(+). It functions in the pathway purine metabolism; GMP biosynthesis; GMP from XMP (L-Gln route): step 1/1. Its function is as follows. Catalyzes the synthesis of GMP from XMP. This chain is GMP synthase [glutamine-hydrolyzing], found in Exiguobacterium sibiricum (strain DSM 17290 / CCUG 55495 / CIP 109462 / JCM 13490 / 255-15).